A 658-amino-acid chain; its full sequence is DNA mismatch repair protein MutL (658 aa).

Residues 114 to 130 (RQEDSSHATQVKAEDGK) are compositionally biased toward basic and acidic residues. The tract at residues 114–137 (RQEDSSHATQVKAEDGKLSSPTAA) is disordered.

It belongs to the DNA mismatch repair MutL/HexB family.

Functionally, this protein is involved in the repair of mismatches in DNA. It is required for dam-dependent methyl-directed DNA mismatch repair. May act as a 'molecular matchmaker', a protein that promotes the formation of a stable complex between two or more DNA-binding proteins in an ATP-dependent manner without itself being part of a final effector complex. This chain is DNA mismatch repair protein MutL, found in Neisseria meningitidis serogroup C / serotype 2a (strain ATCC 700532 / DSM 15464 / FAM18).